The following is a 382-amino-acid chain: 1-deoxy-D-xylulose 5-phosphate reductoisomerase (382 aa).

Positions 10, 11, 12, 13, 38, and 120 each coordinate NADPH. Lys-121 contributes to the 1-deoxy-D-xylulose 5-phosphate binding site. An NADPH-binding site is contributed by Glu-122. Mn(2+) is bound at residue Asp-146. Residues Ser-147, Glu-148, Ser-172, and His-195 each contribute to the 1-deoxy-D-xylulose 5-phosphate site. Glu-148 contacts Mn(2+). Residue Gly-201 coordinates NADPH. 1-deoxy-D-xylulose 5-phosphate is bound by residues Ser-208, Asn-213, Lys-214, and Glu-217. Glu-217 contacts Mn(2+).

Belongs to the DXR family. It depends on Mg(2+) as a cofactor. The cofactor is Mn(2+).

It catalyses the reaction 2-C-methyl-D-erythritol 4-phosphate + NADP(+) = 1-deoxy-D-xylulose 5-phosphate + NADPH + H(+). Its pathway is isoprenoid biosynthesis; isopentenyl diphosphate biosynthesis via DXP pathway; isopentenyl diphosphate from 1-deoxy-D-xylulose 5-phosphate: step 1/6. Its function is as follows. Catalyzes the NADPH-dependent rearrangement and reduction of 1-deoxy-D-xylulose-5-phosphate (DXP) to 2-C-methyl-D-erythritol 4-phosphate (MEP). The sequence is that of 1-deoxy-D-xylulose 5-phosphate reductoisomerase from Thermoanaerobacter pseudethanolicus (strain ATCC 33223 / 39E) (Clostridium thermohydrosulfuricum).